Consider the following 250-residue polypeptide: DNA repair protein RecO (250 aa).

Belongs to the RecO family.

Involved in DNA repair and RecF pathway recombination. The polypeptide is DNA repair protein RecO (Staphylococcus aureus (strain COL)).